The chain runs to 297 residues: Acetyl-coenzyme A carboxylase carboxyl transferase subunit beta (297 aa).

A CoA carboxyltransferase N-terminal domain is found at 27-296 (LWHKCPACEA…PEQAREAAAV (270 aa)). Positions 31, 34, 50, and 53 each coordinate Zn(2+). A C4-type zinc finger spans residues 31-53 (CPACEAVLYRPELEKTLDVCPKC).

Belongs to the AccD/PCCB family. As to quaternary structure, acetyl-CoA carboxylase is a heterohexamer composed of biotin carboxyl carrier protein (AccB), biotin carboxylase (AccC) and two subunits each of ACCase subunit alpha (AccA) and ACCase subunit beta (AccD). The cofactor is Zn(2+).

The protein resides in the cytoplasm. The catalysed reaction is N(6)-carboxybiotinyl-L-lysyl-[protein] + acetyl-CoA = N(6)-biotinyl-L-lysyl-[protein] + malonyl-CoA. The protein operates within lipid metabolism; malonyl-CoA biosynthesis; malonyl-CoA from acetyl-CoA: step 1/1. Component of the acetyl coenzyme A carboxylase (ACC) complex. Biotin carboxylase (BC) catalyzes the carboxylation of biotin on its carrier protein (BCCP) and then the CO(2) group is transferred by the transcarboxylase to acetyl-CoA to form malonyl-CoA. The polypeptide is Acetyl-coenzyme A carboxylase carboxyl transferase subunit beta (Pseudomonas putida (strain W619)).